The following is a 63-amino-acid chain: Jingdongin-1 (63 aa).

A signal peptide spans 1 to 22 (MLTLKKSMLLLFFLGTINLSLC). Residues 23–44 (EQERDADEEERRDDDEMDVEVE) constitute a propeptide that is removed on maturation. C57 and C63 form a disulfide bridge.

Expressed by the skin glands.

It is found in the secreted. In terms of biological role, the synthetic peptide has antimicrobial activity against Gram-negative bacterium B.dysenteriae (MIC=35 ug/ml), against Gram-positive bacteria S.aureus ATCC 2592 (MIC=4.7 ug/ml) and B.subtilis ATCC 6633 (MIC=9.38 ug/ml) and against fungus C.albicans (MIC=18.75 ug/ml). Has no activity against Gram-negative bacterium E.coli ATCC 25922 but exhibits low hemolytic activity at concentrations up to 200 ug/ml. The polypeptide is Jingdongin-1 (Amolops jingdongensis (Chinese torrent frog)).